A 273-amino-acid chain; its full sequence is Hydroxyethylthiazole kinase (273 aa).

Met-49 contributes to the substrate binding site. Arg-125 and Thr-171 together coordinate ATP. Residue Gly-198 coordinates substrate.

The protein belongs to the Thz kinase family. It depends on Mg(2+) as a cofactor.

It catalyses the reaction 5-(2-hydroxyethyl)-4-methylthiazole + ATP = 4-methyl-5-(2-phosphooxyethyl)-thiazole + ADP + H(+). Its pathway is cofactor biosynthesis; thiamine diphosphate biosynthesis; 4-methyl-5-(2-phosphoethyl)-thiazole from 5-(2-hydroxyethyl)-4-methylthiazole: step 1/1. Functionally, catalyzes the phosphorylation of the hydroxyl group of 4-methyl-5-beta-hydroxyethylthiazole (THZ). The chain is Hydroxyethylthiazole kinase from Desulforudis audaxviator (strain MP104C).